The following is a 330-amino-acid chain: Ketol-acid reductoisomerase (NADP(+)) (330 aa).

The region spanning 1 to 181 is the KARI N-terminal Rossmann domain; the sequence is MKVFYDSDFK…GLSRAGVIQT (181 aa). NADP(+) contacts are provided by residues 24 to 27, R47, S52, and 82 to 85; these read YGSQ and DELQ. The active site involves H107. G133 lines the NADP(+) pocket. The 146-residue stretch at 182-327 folds into the KARI C-terminal knotted domain; sequence TFKEETETDL…AKLRKMCGLE (146 aa). Positions 190, 194, 226, and 230 each coordinate Mg(2+). S251 is a binding site for substrate.

It belongs to the ketol-acid reductoisomerase family. Requires Mg(2+) as cofactor.

It carries out the reaction (2R)-2,3-dihydroxy-3-methylbutanoate + NADP(+) = (2S)-2-acetolactate + NADPH + H(+). The enzyme catalyses (2R,3R)-2,3-dihydroxy-3-methylpentanoate + NADP(+) = (S)-2-ethyl-2-hydroxy-3-oxobutanoate + NADPH + H(+). It functions in the pathway amino-acid biosynthesis; L-isoleucine biosynthesis; L-isoleucine from 2-oxobutanoate: step 2/4. Its pathway is amino-acid biosynthesis; L-valine biosynthesis; L-valine from pyruvate: step 2/4. Involved in the biosynthesis of branched-chain amino acids (BCAA). Catalyzes an alkyl-migration followed by a ketol-acid reduction of (S)-2-acetolactate (S2AL) to yield (R)-2,3-dihydroxy-isovalerate. In the isomerase reaction, S2AL is rearranged via a Mg-dependent methyl migration to produce 3-hydroxy-3-methyl-2-ketobutyrate (HMKB). In the reductase reaction, this 2-ketoacid undergoes a metal-dependent reduction by NADPH to yield (R)-2,3-dihydroxy-isovalerate. In Methanococcus maripaludis (strain C7 / ATCC BAA-1331), this protein is Ketol-acid reductoisomerase (NADP(+)).